A 274-amino-acid chain; its full sequence is MSTDNINTPMIELKNVKFKYSTGTSFALNDVSINFPQGKYTAILGHNGSGKSTLSKIIAGLYKPTSGDVYIDGIKLQRSTLRKLQEKIGIIFQNPDNQFIGATVEDDIAFGLENKLIPRNEMKKIILDLSKRVGMDKYLDREPQYLSGGQKQRVAIASILALDPEIIIFDEVTSMLDPKGKKEVLKLIREIQQTRKKTLISITHDMDEAILADRVLVLAEGELIASGDPLEILKNERVIEIAKIDSPFIYRVSKLLKNVDPTYDQDKLIGEICK.

In terms of domain architecture, ABC transporter spans 11–245 (IELKNVKFKY…ERVIEIAKID (235 aa)). Position 45–52 (45–52 (GHNGSGKS)) interacts with ATP.

This sequence belongs to the ABC transporter superfamily. Energy-coupling factor EcfA family. In terms of assembly, forms a stable energy-coupling factor (ECF) transporter complex composed of 2 membrane-embedded substrate-binding proteins (S component), 2 ATP-binding proteins (A component) and 2 transmembrane proteins (T component).

It is found in the cell membrane. Its function is as follows. ATP-binding (A) component of a common energy-coupling factor (ECF) ABC-transporter complex. Unlike classic ABC transporters this ECF transporter provides the energy necessary to transport a number of different substrates. The polypeptide is Energy-coupling factor transporter ATP-binding protein EcfA1 (Mycoplasma mobile (strain ATCC 43663 / 163K / NCTC 11711) (Mesomycoplasma mobile)).